We begin with the raw amino-acid sequence, 520 residues long: ATP synthase subunit alpha 2 (520 aa).

176-183 (GDRQTGKT) lines the ATP pocket.

Belongs to the ATPase alpha/beta chains family. F-type ATPases have 2 components, CF(1) - the catalytic core - and CF(0) - the membrane proton channel. CF(1) has five subunits: alpha(3), beta(3), gamma(1), delta(1), epsilon(1). CF(0) has three main subunits: a(1), b(2) and c(9-12). The alpha and beta chains form an alternating ring which encloses part of the gamma chain. CF(1) is attached to CF(0) by a central stalk formed by the gamma and epsilon chains, while a peripheral stalk is formed by the delta and b chains.

It is found in the cell inner membrane. The enzyme catalyses ATP + H2O + 4 H(+)(in) = ADP + phosphate + 5 H(+)(out). Its function is as follows. Produces ATP from ADP in the presence of a proton gradient across the membrane. The alpha chain is a regulatory subunit. The chain is ATP synthase subunit alpha 2 from Polaromonas naphthalenivorans (strain CJ2).